An 87-amino-acid polypeptide reads, in one-letter code: Venom serine protease inhibitor (87 aa).

A signal peptide spans 1–23 (MPRLVLVSFLFLAIFSVFIGGFA). Disulfide bonds link C27–C61, C36–C57, C40–C53, C44–C81, and C63–C75. The TIL domain maps to 27–81 (CPRNEIFTRCHAACQPSCARLARKPFCIKICKPGCICTSGYLRNKNNVCVPRSRC).

Belongs to the serine protease inhibitor-like (TIL domain-containing) family. In terms of tissue distribution, specifically expressed by the venom gland.

It is found in the secreted. In terms of biological role, antifibrinolytic and antimicrobial serine protease inhibitor. Inhibits trypsin, plasmin and microbial serine proteases but not chymotrypsin, thrombin and elastase. Inhibits the plasmin-mediated degradation of fibrin to fibrin degradation products. Also binds to bacterial and fungal surfaces and exhibits antimicrobial activity against fungi as well as Gram-positive and Gram-negative bacteria. The protein is Venom serine protease inhibitor of Apis cerana (Indian honeybee).